A 118-amino-acid chain; its full sequence is Cycloviolacin-O8 (118 aa).

A signal peptide spans 1-22 (MEMKNMVVGLFLIAAFALPALA). Positions 23-84 (TNFEKDFITH…THSNSINALG (62 aa)) are excised as a propeptide. A cross-link (cyclopeptide (Gly-Asn)) is located at residues 85 to 115 (GTLPCGESCVWIPCISSVVGCSCKSKVCYKN). Intrachain disulfides connect C89/C105, C93/C107, and C98/C112. The propeptide occupies 116–118 (SLA).

In terms of processing, cycloviolacin-O8 is a cyclic peptide. As to expression, expressed in leaves, petals, petioles and roots but not in runners (at protein level).

In terms of biological role, probably participates in a plant defense mechanism. In Viola odorata (Sweet violet), this protein is Cycloviolacin-O8 (Voc1).